The sequence spans 875 residues: Kelch-like protein 29 (875 aa).

The segment covering 113–126 (IRWGQTPVNQSTPW) has biased composition (polar residues). Disordered regions lie at residues 113–145 (IRWG…PGTG) and 240–291 (GVGQ…DSAH). Residues 131-140 (PPSKQMRESD) are compositionally biased toward basic and acidic residues. Residues 270–280 (PSAALPSSVPA) are compositionally biased toward low complexity. The BTB domain maps to 329–401 (TDLKIVVEGR…VYTGSLVIDS (73 aa)). 6 Kelch repeats span residues 585 to 635 (VIVL…VSAG), 637 to 683 (NIYL…VYDG), 684 to 730 (KIYT…VCGG), 732 to 778 (IYVF…TLNG), 779 to 821 (FVFI…VLDG), and 822 to 870 (KIYA…VIKK).

This chain is Kelch-like protein 29 (Klhl29), found in Mus musculus (Mouse).